The following is a 188-amino-acid chain: dCTP deaminase (188 aa).

DCTP is bound by residues 111–116 (KSTYAR), 135–137 (TLE), Gln156, Tyr170, and Gln180. Residue Glu137 is the Proton donor/acceptor of the active site.

It belongs to the dCTP deaminase family. As to quaternary structure, homotrimer.

It carries out the reaction dCTP + H2O + H(+) = dUTP + NH4(+). Its pathway is pyrimidine metabolism; dUMP biosynthesis; dUMP from dCTP (dUTP route): step 1/2. In terms of biological role, catalyzes the deamination of dCTP to dUTP. This is dCTP deaminase from Marinobacter nauticus (strain ATCC 700491 / DSM 11845 / VT8) (Marinobacter aquaeolei).